Reading from the N-terminus, the 263-residue chain is Indole-3-glycerol phosphate synthase (263 aa).

Belongs to the TrpC family.

It catalyses the reaction 1-(2-carboxyphenylamino)-1-deoxy-D-ribulose 5-phosphate + H(+) = (1S,2R)-1-C-(indol-3-yl)glycerol 3-phosphate + CO2 + H2O. Its pathway is amino-acid biosynthesis; L-tryptophan biosynthesis; L-tryptophan from chorismate: step 4/5. The sequence is that of Indole-3-glycerol phosphate synthase from Sulfurimonas denitrificans (strain ATCC 33889 / DSM 1251) (Thiomicrospira denitrificans (strain ATCC 33889 / DSM 1251)).